A 1399-amino-acid chain; its full sequence is DNA-directed RNA polymerase subunit beta' (1399 aa).

Residues Cys-70, Cys-72, Cys-85, and Cys-88 each contribute to the Zn(2+) site. The Mg(2+) site is built by Asp-460, Asp-462, and Asp-464. Zn(2+) contacts are provided by Cys-814, Cys-888, Cys-895, and Cys-898.

This sequence belongs to the RNA polymerase beta' chain family. As to quaternary structure, the RNAP catalytic core consists of 2 alpha, 1 beta, 1 beta' and 1 omega subunit. When a sigma factor is associated with the core the holoenzyme is formed, which can initiate transcription. Mg(2+) serves as cofactor. The cofactor is Zn(2+).

It carries out the reaction RNA(n) + a ribonucleoside 5'-triphosphate = RNA(n+1) + diphosphate. Its function is as follows. DNA-dependent RNA polymerase catalyzes the transcription of DNA into RNA using the four ribonucleoside triphosphates as substrates. The chain is DNA-directed RNA polymerase subunit beta' from Pseudomonas fluorescens (strain SBW25).